Here is a 568-residue protein sequence, read N- to C-terminus: Glucose-6-phosphate isomerase, cytosolic 1 (568 aa).

The active-site Proton donor is the E360. Active-site residues include H391 and K516.

It belongs to the GPI family. As to quaternary structure, homodimer.

The protein localises to the cytoplasm. It carries out the reaction alpha-D-glucose 6-phosphate = beta-D-fructose 6-phosphate. Its pathway is carbohydrate degradation; glycolysis; D-glyceraldehyde 3-phosphate and glycerone phosphate from D-glucose: step 2/4. The protein is Glucose-6-phosphate isomerase, cytosolic 1 (PGIC1) of Clarkia arcuata (Glandular clarkia).